The sequence spans 454 residues: Asparagine--tRNA ligase (454 aa).

This sequence belongs to the class-II aminoacyl-tRNA synthetase family. As to quaternary structure, homodimer.

It localises to the cytoplasm. The enzyme catalyses tRNA(Asn) + L-asparagine + ATP = L-asparaginyl-tRNA(Asn) + AMP + diphosphate + H(+). This chain is Asparagine--tRNA ligase, found in Mycoplasma capricolum subsp. capricolum (strain California kid / ATCC 27343 / NCTC 10154).